Here is a 254-residue protein sequence, read N- to C-terminus: MISPDAARNVVGIIGNVISFGLFLAPVPTFWRICKRKDVEEFKADPYLATLLNCMLWVFYGIPIVHPNSILVVTINGIGLVVEGTYLFIFFLYSPNKKRLRMLAVLGVELVFMLAVILGVLLGAHTHKKRSMIVGILCVFFGSIMYFSPLTIMGKVIKTKSVEYMPFFLSLVCFLNGVCWTAYALIRFDIYVTIPNSLGAIFGAIQLILYACYYRTTPKKTKAAKDVEMPSVISGPGAAATASGGSVVSVTVER.

At 1-9 (MISPDAARN) the chain is on the extracellular side. Residues 10-30 (VVGIIGNVISFGLFLAPVPTF) form a helical membrane-spanning segment. A MtN3/slv 1 domain is found at 10-98 (VVGIIGNVIS…IFFLYSPNKK (89 aa)). The Cytoplasmic portion of the chain corresponds to 31 to 45 (WRICKRKDVEEFKAD). A helical membrane pass occupies residues 46-66 (PYLATLLNCMLWVFYGIPIVH). The Extracellular portion of the chain corresponds to 67 to 69 (PNS). Residues 70–90 (ILVVTINGIGLVVEGTYLFIF) form a helical membrane-spanning segment. Over 91–101 (FLYSPNKKRLR) the chain is Cytoplasmic. Residues 102–122 (MLAVLGVELVFMLAVILGVLL) form a helical membrane-spanning segment. The Extracellular segment spans residues 123–131 (GAHTHKKRS). The chain crosses the membrane as a helical span at residues 132–152 (MIVGILCVFFGSIMYFSPLTI). The 84-residue stretch at 133–216 (IVGILCVFFG…LILYACYYRT (84 aa)) folds into the MtN3/slv 2 domain. At 153-165 (MGKVIKTKSVEYM) the chain is on the cytoplasmic side. Residues 166 to 186 (PFFLSLVCFLNGVCWTAYALI) traverse the membrane as a helical segment. Residues 187–189 (RFD) lie on the Extracellular side of the membrane. A helical membrane pass occupies residues 190–210 (IYVTIPNSLGAIFGAIQLILY). The Cytoplasmic segment spans residues 211–254 (ACYYRTTPKKTKAAKDVEMPSVISGPGAAATASGGSVVSVTVER).

The protein belongs to the SWEET sugar transporter family. In terms of assembly, forms homooligomers and/or heterooligomers.

Its subcellular location is the cell membrane. Functionally, mediates both low-affinity uptake and efflux of sugar across the plasma membrane. In Oryza sativa subsp. indica (Rice), this protein is Bidirectional sugar transporter SWEET6b (SWEET6B).